An 88-amino-acid polypeptide reads, in one-letter code: Large ribosomal subunit protein bL27 (88 aa).

Positions 1–21 (MAHKKGASSSRNGRDSNAQRL) are disordered. The span at 7–19 (ASSSRNGRDSNAQ) shows a compositional bias: polar residues.

The protein belongs to the bacterial ribosomal protein bL27 family.

The chain is Large ribosomal subunit protein bL27 from Frankia casuarinae (strain DSM 45818 / CECT 9043 / HFP020203 / CcI3).